A 393-amino-acid polypeptide reads, in one-letter code: Protein TsgA (393 aa).

Transmembrane regions (helical) follow at residues 11 to 31 (WISF…GMVM), 51 to 71 (FLNA…EIVP), 78 to 98 (FGFL…SLAL), 101 to 121 (AAMF…TFLI), 134 to 154 (LLFT…IAAF), 162 to 182 (WYWV…LTFG), 206 to 226 (IGVL…LGFI), 245 to 265 (TLVS…SFIL), 273 to 293 (ILTV…TGTP), 297 to 317 (AWSI…IITL), 332 to 352 (FVLT…GPIV), and 361 to 381 (LLTA…LGFV).

Belongs to the major facilitator superfamily. TsgA family.

Its subcellular location is the cell inner membrane. This is Protein TsgA from Escherichia coli O7:K1 (strain IAI39 / ExPEC).